A 319-amino-acid polypeptide reads, in one-letter code: 3-oxoacyl-[acyl-carrier-protein] reductase, chloroplastic (319 aa).

A chloroplast-targeting transit peptide spans 1–57 (MAAAVAAPRLISLKAVAKLGFREISQIRQLAPLHSAIPHFGMLRCRSRQPFSTSVVK). Alanine 58 is modified (N-acetylalanine). Residue 81 to 105 (ITGASRGIGKAIALALGKAGCKVLV) participates in NADP(+) binding. Residue serine 213 coordinates substrate. The active-site Proton acceptor is tyrosine 226.

It belongs to the short-chain dehydrogenases/reductases (SDR) family. In terms of assembly, homotetramer.

Its subcellular location is the plastid. It is found in the chloroplast. The enzyme catalyses a (3R)-hydroxyacyl-[ACP] + NADP(+) = a 3-oxoacyl-[ACP] + NADPH + H(+). It participates in lipid metabolism; fatty acid biosynthesis. The sequence is that of 3-oxoacyl-[acyl-carrier-protein] reductase, chloroplastic from Arabidopsis thaliana (Mouse-ear cress).